A 146-amino-acid chain; its full sequence is Large ribosomal subunit protein uL15 (146 aa).

Residues 1–13 show a composition bias toward basic and acidic residues; it reads MKLHELRPAEGSR. The tract at residues 1-55 is disordered; that stretch reads MKLHELRPAEGSRKSPKRVGRGTGSGLGKTSARGENGQNSRSGGGVRPGFEGGQM. A compositionally biased stretch (gly residues) spans 42-52; that stretch reads SGGGVRPGFEG.

It belongs to the universal ribosomal protein uL15 family. Part of the 50S ribosomal subunit.

Binds to the 23S rRNA. The sequence is that of Large ribosomal subunit protein uL15 from Clostridium tetani (strain Massachusetts / E88).